The sequence spans 279 residues: Glutamate racemase (279 aa).

Substrate is bound by residues 13–14 (DS) and 45–46 (YG). Cys76 functions as the Proton donor/acceptor in the catalytic mechanism. 77–78 (NT) contacts substrate. Catalysis depends on Cys185, which acts as the Proton donor/acceptor. 186–187 (TH) contacts substrate.

This sequence belongs to the aspartate/glutamate racemases family.

It catalyses the reaction L-glutamate = D-glutamate. It functions in the pathway cell wall biogenesis; peptidoglycan biosynthesis. Functionally, provides the (R)-glutamate required for cell wall biosynthesis. In Synechocystis sp. (strain ATCC 27184 / PCC 6803 / Kazusa), this protein is Glutamate racemase.